Consider the following 1561-residue polypeptide: Sterile alpha motif domain-containing protein 9-like (1561 aa).

Positions 14–79 (WTKEHVRKWV…RMYNKLISSP (66 aa)) constitute an SAM domain. Residues 78-157 (SPESHNQDSR…DNKPKPEQMS (80 aa)) are disordered. Composition is skewed to basic and acidic residues over residues 82–107 (HNQD…KNEE) and 142–153 (VTKDMEDNKPKP).

As to quaternary structure, interacts with EEA1.

The protein localises to the early endosome. It localises to the mitochondrion. May be involved in endosome fusion. Mediates down-regulation of growth factor signaling via internalization of growth factor receptors. The protein is Sterile alpha motif domain-containing protein 9-like (Samd9l) of Mus musculus (Mouse).